Reading from the N-terminus, the 1194-residue chain is Metabotropic glutamate receptor 1 (1194 aa).

Positions 1–18 (MVGLLLFFFPAIFLEVSL) are cleaved as a signal peptide. At 19–592 (LPRSPGRKVL…VRYLEWSNIE (574 aa)) the chain is on the extracellular side. Cys67 and Cys109 are oxidised to a cystine. Position 74 (Tyr74) interacts with L-glutamate. An N-linked (GlcNAc...) asparagine glycan is attached at Asn98. Residues Ser165 and 186–188 (SAT) each bind L-glutamate. A glycan (N-linked (GlcNAc...) asparagine) is linked at Asn223. Tyr236 lines the L-glutamate pocket. Cysteines 289 and 291 form a disulfide. Asp318 contacts L-glutamate. Residues Cys378 and Cys394 are joined by a disulfide bond. An N-linked (GlcNAc...) asparagine glycan is attached at Asn397. Lys409 is a binding site for L-glutamate. Cysteines 432 and 439 form a disulfide. Asn515 is a glycosylation site (N-linked (GlcNAc...) asparagine). Residues 593 to 615 (SIIAIAFSCLGILVTLFVTLIFV) traverse the membrane as a helical segment. The Cytoplasmic segment spans residues 616–629 (LYRDTPVVKSSSRE). The helical transmembrane segment at 630-650 (LCYIILAGIFLGYVCPFTLIA) threads the bilayer. Topologically, residues 651–658 (KPTTTSCY) are extracellular. Cysteines 657 and 746 form a disulfide. A helical membrane pass occupies residues 659–680 (LQRLLVGLSSAMCYSALVTKTN). The Cytoplasmic segment spans residues 681 to 703 (RIARILAGSKKKICTRKPRFMSA). The chain crosses the membrane as a helical span at residues 704-727 (WAQVIIASILISVQLTLVVTLIIM). The Extracellular portion of the chain corresponds to 728 to 750 (EPPMPILSYPSIKEVYLICNTSN). The chain crosses the membrane as a helical span at residues 751-772 (LGVVAPLGYNGLLIMSCTYYAF). At 773–785 (KTRNVPANFNEAK) the chain is on the cytoplasmic side. The helical transmembrane segment at 786–807 (YIAFTMYTTCIIWLAFVPIYFG) threads the bilayer. Topologically, residues 808–815 (SNYKIITT) are extracellular. A helical transmembrane segment spans residues 816 to 840 (CFAVSLSVTVALGCMFTPKMYIIIA). Residues 841-1194 (KPERNVRSAF…RDYKQSSSTL (354 aa)) are Cytoplasmic-facing. Ser853 carries the phosphoserine modification. At Thr871 the chain carries Phosphothreonine. The tract at residues 883 to 905 (AGNANSNGKSVSWSEPGGGQVPK) is disordered. Residues 885 to 895 (NANSNGKSVSW) show a composition bias toward polar residues. Phosphoserine occurs at positions 894 and 969. Residues 1007–1030 (PALPKGLPPPLQQQQQPPPQQKSL) are disordered. Pro residues predominate over residues 1012–1026 (GLPPPLQQQQQPPPQ). At Ser1091 the chain carries Phosphoserine. The segment at 1113 to 1173 (HEREGNTEED…SPVSESVLCT (61 aa)) is disordered. Positions 1119 to 1131 (TEEDELEEEEEDL) are enriched in acidic residues. Ser1142 bears the Phosphoserine mark. Thr1146 carries the post-translational modification Phosphothreonine. Ser1149 bears the Phosphoserine mark. The segment covering 1154 to 1170 (SVASGSSVPSSPVSESV) has biased composition (low complexity).

It belongs to the G-protein coupled receptor 3 family. In terms of assembly, homodimer; disulfide-linked. The PPXXF motif binds HOMER1, HOMER2 and HOMER3. Interacts with TAMALIN. Interacts with RYR1, RYR2, ITPR1, SHANK1 and SHANK3. Interacts with SIAH1. In terms of tissue distribution, detected in brain.

It is found in the cell membrane. The protein localises to the postsynaptic cell membrane. The protein resides in the cell projection. It localises to the dendrite. Signaling is inhibited by the antagonist LY341495. The LY341495 binding site partially overlaps with the glutamate binding site. Signaling is also inhibited by synthetic allosteric regulators, such as FITM (4-fluoro-N-(4-(6-(isopropylamino)pyrimidin-4-yl)thiazol-2-yl)-N-methylbenzamide) that bind in a pocket between the transmembrane helices. Functionally, G-protein coupled receptor for glutamate. Ligand binding causes a conformation change that triggers signaling via guanine nucleotide-binding proteins (G proteins) and modulates the activity of down-stream effectors. Signaling activates a phosphatidylinositol-calcium second messenger system. May participate in the central action of glutamate in the CNS, such as long-term potentiation in the hippocampus and long-term depression in the cerebellum. May function in the light response in the retina. Induces GRID1 and GRID2 cation-channel activation via GNAQ-PLC-PKC pathway in dopaminergic neurons and cerebellar Purkinje cell, respectively. The sequence is that of Metabotropic glutamate receptor 1 (GRM1) from Homo sapiens (Human).